Reading from the N-terminus, the 202-residue chain is uncharacterized protein (202 aa).

The region spanning 13–73 is the HTH tetR-type domain; sequence ELAADRILDA…AYVHRETRRL (61 aa). The H-T-H motif DNA-binding region spans 36 to 55; that stretch reads GMNEIAKAAGCSRATLYRYF.

This is an uncharacterized protein from Mycobacterium tuberculosis (strain CDC 1551 / Oshkosh).